The chain runs to 207 residues: HTH-type transcriptional regulator AqdR (207 aa).

Positions 16–76 constitute an HTH tetR-type domain; it reads ARFRERVLDA…DALLTRTQAE (61 aa). A DNA-binding region (H-T-H motif) is located at residues 39-58; sequence GFADVARKAGVNGVSLYRRW.

Its function is as follows. May regulate the expression of genes involved in the degradation of the Pseudomonas aeruginosa quorum sensing signal molecules HHQ (2-heptyl-4-quinolone) and PQS (2-heptyl-3-hydroxy-4-quinolone). This Rhodococcus erythropolis (Arthrobacter picolinophilus) protein is HTH-type transcriptional regulator AqdR.